We begin with the raw amino-acid sequence, 205 residues long: Protein phosphatase inhibitor 2 (205 aa).

The tract at residues 1–44 is disordered; sequence MAASTASHRPIKGILKNKTSTTSSVVASAEQPRRTVEEELSKKS. Alanine 2 is modified (N-acetylalanine). Positions 12-17 are required for binding PPP1CC; sequence KGILKN. Residues 19 to 29 show a composition bias toward low complexity; that stretch reads TSTTSSVVASA. Residues 31–44 show a composition bias toward basic and acidic residues; the sequence is QPRRTVEEELSKKS. The required for binding PPP1CC stretch occupies residues 43–55; the sequence is KSQKWDEMNILAT. Serine 44 is modified (phosphoserine; by ATM). At threonine 73 the chain carries Phosphothreonine; by GSK3. Phosphoserine occurs at positions 87 and 89. 2 positions are modified to phosphothreonine: threonine 96 and threonine 116. Residues 104 to 142 are disordered; sequence LAAAEGSEPKFRTREQESSGEEDNDLSPEEREKKRQFEM. The segment covering 110 to 120 has biased composition (basic and acidic residues); it reads SEPKFRTREQE. Phosphoserine occurs at positions 121, 122, and 130. Residues 121–130 are compositionally biased toward acidic residues; that stretch reads SSGEEDNDLS. A compositionally biased stretch (basic and acidic residues) spans 131 to 142; that stretch reads PEEREKKRQFEM. Residues 147–150 form a required for binding PPP1CC catalytic center, displacing metal ions and inhibition of PPP1CC catalytic activity region; that stretch reads HYNE. Positions 163–205 are disordered; it reads KDLHDDDEDEEMSETADADSMNIEESNQGSTAGDHLQHKSQSS. A compositionally biased stretch (acidic residues) spans 167-179; that stretch reads DDDEDEEMSETAD.

This sequence belongs to the protein phosphatase inhibitor 2 family. In terms of assembly, heterodimer with PP1. Post-translationally, phosphorylation on Ser-44 by ATM activates PP1 by dissociating the PP1-PPP1R2 complex. Phosphorylation on Thr-73 by GSK3 activates PP1 by dissociating the PP1-PPP1R2 complex. In terms of tissue distribution, central nervous system.

Inhibitor of protein-phosphatase 1. The chain is Protein phosphatase inhibitor 2 (Ppp1r2) from Rattus norvegicus (Rat).